Here is a 511-residue protein sequence, read N- to C-terminus: 2,3-bisphosphoglycerate-independent phosphoglycerate mutase (511 aa).

Asp-12 provides a ligand contact to Mn(2+). The residue at position 36 (Tyr-36) is a Phosphotyrosine. Ser-62 serves as a coordination point for Mn(2+). The Phosphoserine intermediate role is filled by Ser-62. Substrate-binding positions include His-123, 153 to 154 (RD), Arg-185, Arg-191, 261 to 264 (RPDR), and Lys-336. Positions 403, 407, 444, 445, and 462 each coordinate Mn(2+).

It belongs to the BPG-independent phosphoglycerate mutase family. In terms of assembly, monomer. Mn(2+) serves as cofactor.

It carries out the reaction (2R)-2-phosphoglycerate = (2R)-3-phosphoglycerate. It participates in carbohydrate degradation; glycolysis; pyruvate from D-glyceraldehyde 3-phosphate: step 3/5. Functionally, essential for rapid growth and for sporulation. Catalyzes the interconversion of 2-phosphoglycerate and 3-phosphoglycerate. The chain is 2,3-bisphosphoglycerate-independent phosphoglycerate mutase from Bacillus pumilus (strain SAFR-032).